We begin with the raw amino-acid sequence, 208 residues long: Mediator of RNA polymerase II transcription subunit 18 (208 aa).

At S66 the chain carries Phosphoserine.

Belongs to the Mediator complex subunit 18 family. Component of the Mediator complex, which is composed of MED1, MED4, MED6, MED7, MED8, MED9, MED10, MED11, MED12, MED13, MED13L, MED14, MED15, MED16, MED17, MED18, MED19, MED20, MED21, MED22, MED23, MED24, MED25, MED26, MED27, MED29, MED30, MED31, CCNC, CDK8 and CDC2L6/CDK11. The MED12, MED13, CCNC and CDK8 subunits form a distinct module termed the CDK8 module. Mediator containing the CDK8 module is less active than Mediator lacking this module in supporting transcriptional activation. Individual preparations of the Mediator complex lacking one or more distinct subunits have been variously termed ARC, CRSP, DRIP, PC2, SMCC and TRAP.

The protein resides in the nucleus. Functionally, component of the Mediator complex, a coactivator involved in the regulated transcription of nearly all RNA polymerase II-dependent genes. Mediator functions as a bridge to convey information from gene-specific regulatory proteins to the basal RNA polymerase II transcription machinery. Mediator is recruited to promoters by direct interactions with regulatory proteins and serves as a scaffold for the assembly of a functional preinitiation complex with RNA polymerase II and the general transcription factors. This chain is Mediator of RNA polymerase II transcription subunit 18 (MED18), found in Bos taurus (Bovine).